A 281-amino-acid polypeptide reads, in one-letter code: Ribosomal protein L11 methyltransferase (281 aa).

S-adenosyl-L-methionine is bound by residues T133, G154, D175, and N216.

This sequence belongs to the methyltransferase superfamily. PrmA family.

The protein resides in the cytoplasm. The enzyme catalyses L-lysyl-[protein] + 3 S-adenosyl-L-methionine = N(6),N(6),N(6)-trimethyl-L-lysyl-[protein] + 3 S-adenosyl-L-homocysteine + 3 H(+). Functionally, methylates ribosomal protein L11. This chain is Ribosomal protein L11 methyltransferase, found in Campylobacter jejuni subsp. jejuni serotype O:23/36 (strain 81-176).